A 379-amino-acid polypeptide reads, in one-letter code: Alcohol dehydrogenase class-2 isozyme 1 (379 aa).

Residues Cys47, His69, Cys99, Cys102, Cys105, Cys113, and Cys176 each contribute to the Zn(2+) site. NAD(+) is bound by residues 205 to 210 (GLGGVG), Asp229, Lys234, 298 to 300 (VGV), and Arg374.

It belongs to the zinc-containing alcohol dehydrogenase family. Class-II subfamily. As to quaternary structure, homodimer. Zn(2+) is required as a cofactor.

Its subcellular location is the cytoplasm. The enzyme catalyses a primary alcohol + NAD(+) = an aldehyde + NADH + H(+). The catalysed reaction is a secondary alcohol + NAD(+) = a ketone + NADH + H(+). In Oryctolagus cuniculus (Rabbit), this protein is Alcohol dehydrogenase class-2 isozyme 1 (ADH2-1).